Reading from the N-terminus, the 639-residue chain is Threonine--tRNA ligase (639 aa).

In terms of domain architecture, TGS spans Met-1 to Thr-61. Residues Asp-239–Pro-536 are catalytic. Zn(2+) contacts are provided by Cys-333, His-384, and His-513.

This sequence belongs to the class-II aminoacyl-tRNA synthetase family. As to quaternary structure, homodimer. The cofactor is Zn(2+).

It localises to the cytoplasm. The catalysed reaction is tRNA(Thr) + L-threonine + ATP = L-threonyl-tRNA(Thr) + AMP + diphosphate + H(+). In terms of biological role, catalyzes the attachment of threonine to tRNA(Thr) in a two-step reaction: L-threonine is first activated by ATP to form Thr-AMP and then transferred to the acceptor end of tRNA(Thr). Also edits incorrectly charged L-seryl-tRNA(Thr). The polypeptide is Threonine--tRNA ligase (Rubrobacter xylanophilus (strain DSM 9941 / JCM 11954 / NBRC 16129 / PRD-1)).